We begin with the raw amino-acid sequence, 345 residues long: Type II restriction enzyme HgiCI (345 aa).

It catalyses the reaction Endonucleolytic cleavage of DNA to give specific double-stranded fragments with terminal 5'-phosphates.. A P subtype restriction enzyme that recognizes the double-stranded sequence 5'-GGYRCC-3' and cleaves after G-1. The protein is Type II restriction enzyme HgiCI (hgiCIR) of Herpetosiphon aurantiacus (Herpetosiphon giganteus).